Here is a 372-residue protein sequence, read N- to C-terminus: tRNA N6-adenosine threonylcarbamoyltransferase (372 aa).

His-133, His-137, and Tyr-154 together coordinate a divalent metal cation. Substrate is bound by residues 154-158 (YVSGG), Asp-186, Gly-201, Glu-205, and Asn-301. Asp-330 serves as a coordination point for a divalent metal cation.

It belongs to the KAE1 / TsaD family. Component of the EKC/KEOPS complex composed of at least BUD32, CGI121, GON7, KAE1 and PCC1; the whole complex dimerizes. The cofactor is a divalent metal cation.

Its subcellular location is the cytoplasm. The protein resides in the nucleus. The catalysed reaction is L-threonylcarbamoyladenylate + adenosine(37) in tRNA = N(6)-L-threonylcarbamoyladenosine(37) in tRNA + AMP + H(+). Its function is as follows. Component of the EKC/KEOPS complex that is required for the formation of a threonylcarbamoyl group on adenosine at position 37 (t(6)A37) in tRNAs that read codons beginning with adenine. The complex is probably involved in the transfer of the threonylcarbamoyl moiety of threonylcarbamoyl-AMP (TC-AMP) to the N6 group of A37. KAE1 likely plays a direct catalytic role in this reaction, but requires other protein(s) of the complex to fulfill this activity. The EKC/KEOPS complex also promotes both telomere uncapping and telomere elongation. The complex is required for efficient recruitment of transcriptional coactivators. The chain is tRNA N6-adenosine threonylcarbamoyltransferase from Candida albicans (strain SC5314 / ATCC MYA-2876) (Yeast).